Here is a 149-residue protein sequence, read N- to C-terminus: Protein E6 (149 aa).

Zinc fingers lie at residues 30-66 (CVYC…CMKC) and 103-139 (CITC…CMSC). The short motif at 147 to 149 (TEV) is the PDZ-binding domain element.

It belongs to the papillomaviridae E6 protein family. As to quaternary structure, forms homodimers. Interacts with ubiquitin-protein ligase UBE3A/E6-AP and thus forms a complex with human TP53. Interacts with human NFX1 and MAGI3. Interacts with human IRF3; this interaction inhibits the establishment of antiviral state. Interacts with human TYK2; this interaction inhibits JAK-STAT activation by interferon alpha. Interacts with host DLG1; this interaction leads to the proteasomal degradation of DLG1.

It localises to the host cytoplasm. The protein localises to the host nucleus. In terms of biological role, this protein may be involved in the oncogenic potential of this virus (associated with cancer of the uterine cervix). Functionally, plays a major role in the induction and maintenance of cellular transformation. Acts mainly as an oncoprotein by stimulating the destruction of many host cell key regulatory proteins. E6 associates with host UBE3A/E6-AP ubiquitin-protein ligase, and inactivates tumor suppressors TP53 and TP73 by targeting them to the 26S proteasome for degradation. In turn, DNA damage and chromosomal instabilities increase and lead to cell proliferation and cancer development. The complex E6/E6AP targets several other substrates to degradation via the proteasome including host DLG1 or NFX1, a repressor of human telomerase reverse transcriptase (hTERT). The resulting increased expression of hTERT prevents the shortening of telomere length leading to cell immortalization. Other cellular targets including BAK1, Fas-associated death domain-containing protein (FADD) and procaspase 8, are degraded by E6/E6AP causing inhibition of apoptosis. E6 also inhibits immune response by interacting with host IRF3 and TYK2. These interactions prevent IRF3 transcriptional activities and inhibit TYK2-mediated JAK-STAT activation by interferon alpha resulting in inhibition of the interferon signaling pathway. The protein is Protein E6 of Human papillomavirus 35.